The chain runs to 258 residues: Imidazole glycerol phosphate synthase subunit HisF (258 aa).

Active-site residues include Asp11 and Asp130.

Belongs to the HisA/HisF family. As to quaternary structure, heterodimer of HisH and HisF.

The protein localises to the cytoplasm. The enzyme catalyses 5-[(5-phospho-1-deoxy-D-ribulos-1-ylimino)methylamino]-1-(5-phospho-beta-D-ribosyl)imidazole-4-carboxamide + L-glutamine = D-erythro-1-(imidazol-4-yl)glycerol 3-phosphate + 5-amino-1-(5-phospho-beta-D-ribosyl)imidazole-4-carboxamide + L-glutamate + H(+). Its pathway is amino-acid biosynthesis; L-histidine biosynthesis; L-histidine from 5-phospho-alpha-D-ribose 1-diphosphate: step 5/9. In terms of biological role, IGPS catalyzes the conversion of PRFAR and glutamine to IGP, AICAR and glutamate. The HisF subunit catalyzes the cyclization activity that produces IGP and AICAR from PRFAR using the ammonia provided by the HisH subunit. The sequence is that of Imidazole glycerol phosphate synthase subunit HisF from Shigella sonnei (strain Ss046).